Here is a 245-residue protein sequence, read N- to C-terminus: MRVGVLGAKGKVGATMVSAVESAADLTLSAEVDAGDPLSTLTETNTEAVIDFTHPDVVMGNLEFLIFNGIHAVVGTTGFTAERVEQVQSWLAKKPSTAVLIAPNFAIGAVLSMHFAKQAAPFFDSAEIIELHHPQKADAPSGTATRTAKLIAEAREGLAPNPDATSTSLPGARGADVDGIPVHAVRLAGLVAHQEVLFGTQGETLTIRHDSLDRTSFVPGVLLAVRRVRERPGLTIGIEPLLNLQ.

NAD(+)-binding positions include 7–12, 75–77, and 102–105; these read GAKGKV, GTT, and APNF. His-132 serves as the catalytic Proton donor/acceptor. A (S)-2,3,4,5-tetrahydrodipicolinate-binding site is contributed by His-133. The active-site Proton donor is Lys-136. Position 142-143 (142-143) interacts with (S)-2,3,4,5-tetrahydrodipicolinate; the sequence is GT.

The protein belongs to the DapB family.

It localises to the cytoplasm. It catalyses the reaction (S)-2,3,4,5-tetrahydrodipicolinate + NAD(+) + H2O = (2S,4S)-4-hydroxy-2,3,4,5-tetrahydrodipicolinate + NADH + H(+). The enzyme catalyses (S)-2,3,4,5-tetrahydrodipicolinate + NADP(+) + H2O = (2S,4S)-4-hydroxy-2,3,4,5-tetrahydrodipicolinate + NADPH + H(+). It functions in the pathway amino-acid biosynthesis; L-lysine biosynthesis via DAP pathway; (S)-tetrahydrodipicolinate from L-aspartate: step 4/4. Its function is as follows. Catalyzes the conversion of 4-hydroxy-tetrahydrodipicolinate (HTPA) to tetrahydrodipicolinate. This is 4-hydroxy-tetrahydrodipicolinate reductase from Mycobacterium ulcerans (strain Agy99).